Consider the following 222-residue polypeptide: Adapter protein MecA (222 aa).

It belongs to the MecA family. In terms of assembly, homodimer.

In terms of biological role, enables the recognition and targeting of unfolded and aggregated proteins to the ClpC protease or to other proteins involved in proteolysis. The chain is Adapter protein MecA from Lysinibacillus sphaericus (strain C3-41).